A 299-amino-acid chain; its full sequence is 33 kDa chaperonin (299 aa).

2 disulfides stabilise this stretch: Cys234/Cys236 and Cys268/Cys271.

Belongs to the HSP33 family. Post-translationally, under oxidizing conditions two disulfide bonds are formed involving the reactive cysteines. Under reducing conditions zinc is bound to the reactive cysteines and the protein is inactive.

It localises to the cytoplasm. Redox regulated molecular chaperone. Protects both thermally unfolding and oxidatively damaged proteins from irreversible aggregation. Plays an important role in the bacterial defense system toward oxidative stress. The polypeptide is 33 kDa chaperonin (Pseudomonas putida (strain ATCC 47054 / DSM 6125 / CFBP 8728 / NCIMB 11950 / KT2440)).